Consider the following 98-residue polypeptide: Small ribosomal subunit protein bS6 (98 aa).

The protein belongs to the bacterial ribosomal protein bS6 family.

Functionally, binds together with bS18 to 16S ribosomal RNA. In Staphylococcus epidermidis (strain ATCC 35984 / DSM 28319 / BCRC 17069 / CCUG 31568 / BM 3577 / RP62A), this protein is Small ribosomal subunit protein bS6.